We begin with the raw amino-acid sequence, 136 residues long: Large ribosomal subunit protein bL21 (136 aa).

Belongs to the bacterial ribosomal protein bL21 family. Part of the 50S ribosomal subunit. Contacts protein L20.

Its function is as follows. This protein binds to 23S rRNA in the presence of protein L20. The polypeptide is Large ribosomal subunit protein bL21 (Trichodesmium erythraeum (strain IMS101)).